The chain runs to 72 residues: Translation initiation factor IF-1 (72 aa).

An S1-like domain is found at 1-72 (MSNDDSIEFE…TKGRITYRMK (72 aa)).

It belongs to the IF-1 family. In terms of assembly, component of the 30S ribosomal translation pre-initiation complex which assembles on the 30S ribosome in the order IF-2 and IF-3, IF-1 and N-formylmethionyl-tRNA(fMet); mRNA recruitment can occur at any time during PIC assembly.

It localises to the cytoplasm. Its function is as follows. One of the essential components for the initiation of protein synthesis. Stabilizes the binding of IF-2 and IF-3 on the 30S subunit to which N-formylmethionyl-tRNA(fMet) subsequently binds. Helps modulate mRNA selection, yielding the 30S pre-initiation complex (PIC). Upon addition of the 50S ribosomal subunit IF-1, IF-2 and IF-3 are released leaving the mature 70S translation initiation complex. This Xanthomonas campestris pv. campestris (strain B100) protein is Translation initiation factor IF-1.